We begin with the raw amino-acid sequence, 195 residues long: Apoptosis-associated speck-like protein containing a CARD (195 aa).

One can recognise a Pyrin domain in the interval 1-91; it reads MGCTRDAILD…AEQLQETMSK (91 aa). Residues K55 and K174 each participate in a glycyl lysine isopeptide (Lys-Gly) (interchain with G-Cter in ubiquitin) cross-link. The CARD domain maps to 107–195; it reads TAKPGLHFVD…PYLVDDLEQS (89 aa). Residue S195 is modified to Phosphoserine.

As to quaternary structure, self-associates; enforced oligomerization induces apoptosis, NF-kappa-B regulation and interleukin-1 beta secretion. Homooligomers can form disk-like particles of approximately 12 nm diameter and approximately 1 nm height. Component of several inflammasomes containing one pattern recognition receptor/sensor, such as NLRP1, NLRP2, NLRP3, NLRP6, NLRC4, AIM2, MEFV or NOD2, and probably NLRC4 or NLRP12. Major component of the ASC pyroptosome, a 1-2 um supramolecular assembly (one per macrophage cell) which consists of oligomerized PYCARD dimers and CASP1. Interacts with CASP1 (precursor form); the interaction induces activation of CASP1 leading to the processing of interleukin-1 beta; PYCARD competes with RIPK2 for binding to CASP1. Interacts with NLRP3; the interaction requires the homooligomerization of NLRP3. Interacts with NLRP2, NLRC4, MEFV, CARD16, AIM2, NOD2, RIGI, RIPK2, PYDC1, PYDC2, NLRP10, CASP8, CHUK, IKBKB and BAX. Component of the AIM2 PANoptosome complex, a multiprotein complex that drives inflammatory cell death (PANoptosis). In terms of processing, phosphorylated. 'Lys-63'-linked polyubiquitination by TRAF3 is critical for speck formation and inflammasome activation. 'Lys-63'-linked deubiquitinated by USP50; a crucial step for NLRP3-mediated inflammasome activation. 'Lys-63'-linked polyubiquitination by PELI1 is also critical for speck formation and inflammasome activation. Deubiquitinated by USP3 that cleaves 'Lys-48'-linked ubiquitin chains and strengthens its stability by blocking proteasomal degradation.

The protein localises to the cytoplasm. It localises to the inflammasome. Its subcellular location is the endoplasmic reticulum. The protein resides in the mitochondrion. It is found in the nucleus. In terms of biological role, functions as a key mediator in apoptosis and inflammation. Promotes caspase-mediated apoptosis involving predominantly caspase-8 and also caspase-9 in a probable cell type-specific manner. Involved in activation of the mitochondrial apoptotic pathway, promotes caspase-8-dependent proteolytic maturation of BID independently of FADD in certain cell types and also mediates mitochondrial translocation of BAX and activates BAX-dependent apoptosis coupled to activation of caspase-9, -2 and -3. Involved in innate immune response by acting as an integral adapter in the assembly of various inflammasomes (NLRP2, NLRP3, NLRP6 and AIM2) which recruit and activate caspase-1 leading to processing and secretion of pro-inflammatory cytokines. Caspase-1-dependent inflammation leads to macrophage pyroptosis, a form of cell death. The function as activating adapter in different types of inflammasomes is mediated by the pyrin and CARD domains and their homotypic interactions. Clustered PYCARD nucleates the formation of caspase-1 filaments through the interaction of their respective CARD domains, acting as a platform for of caspase-1 polymerization. In the NLRC4 inflammasomes seems not be required but facilitates the processing of procaspase-1. In cooperation with NOD2 involved in an inflammasome activated by bacterial muramyl dipeptide leading to caspase-1 activation. May be involved in RIGI-triggered pro-inflammatory responses and inflammasome activation. In collaboration with AIM2 which detects cytosolic double-stranded DNA may also be involved in a caspase-1-independent cell death that involves caspase-8. In adaptive immunity may be involved in maturation of dendritic cells to stimulate T-cell immunity and in cytoskeletal rearrangements coupled to chemotaxis and antigen uptake may be involved in post-transcriptional regulation of the guanine nucleotide exchange factor DOCK2; the latter function is proposed to involve the nuclear form. Also involved in transcriptional activation of cytokines and chemokines independent of the inflammasome; this function may involve AP-1, NF-kappa-B, MAPK and caspase-8 signaling pathways. For regulation of NF-kappa-B activating and inhibiting functions have been reported. Modulates NF-kappa-B induction at the level of the IKK complex by inhibiting kinase activity of CHUK and IKBK. Proposed to compete with RIPK2 for association with CASP1 thereby down-regulating CASP1-mediated RIPK2-dependent NF-kappa-B activation and activating interleukin-1 beta processing. Modulates host resistance to DNA virus infection, probably by inducing the cleavage of and inactivating CGAS in presence of cytoplasmic double-stranded DNA. This chain is Apoptosis-associated speck-like protein containing a CARD (PYCARD), found in Bos taurus (Bovine).